The following is a 382-amino-acid chain: Two-component response regulator ARR14 (382 aa).

Residues 12–128 enclose the Response regulatory domain; it reads RILVVDDDTS…ELKNIWQHVV (117 aa). A 4-aspartylphosphate modification is found at D63. A compositionally biased stretch (basic residues) spans 171–181; it reads CRNKKKKKKRS. Positions 171–193 are disordered; sequence CRNKKKKKKRSVDRDDNEDDLLL. Residues 199-202 carry the Nuclear localization signal motif; it reads KKSR. The segment at residues 202 to 252 is a DNA-binding region (myb-like GARP); the sequence is RVVWSIELHQQFVNAVNKLGIDKAVPKRILELMNVPGLSRENVASHLQKFR.

It belongs to the ARR family. Type-B subfamily. In terms of assembly, binds the target DNA as a monomer. Two-component system major event consists of a His-to-Asp phosphorelay between a sensor histidine kinase (HK) and a response regulator (RR). In plants, the His-to-Asp phosphorelay involves an additional intermediate named Histidine-containing phosphotransfer protein (HPt). This multistep phosphorelay consists of a His-Asp-His-Asp sequential transfer of a phosphate group between first a His and an Asp of the HK protein, followed by the transfer to a conserved His of the HPt protein and finally the transfer to an Asp in the receiver domain of the RR protein. As to expression, predominantly expressed in young leaf tissue.

It localises to the nucleus. In terms of biological role, transcriptional activator that binds specifically to the DNA sequence 5'-[AG]GATT-3'. Functions as a response regulator involved in His-to-Asp phosphorelay signal transduction system. Phosphorylation of the Asp residue in the receiver domain activates the ability of the protein to promote the transcription of target genes. Could directly activate some type-A response regulators in response to cytokinins. The polypeptide is Two-component response regulator ARR14 (ARR14) (Arabidopsis thaliana (Mouse-ear cress)).